The following is a 278-amino-acid chain: Bis(5'-nucleosyl)-tetraphosphatase, symmetrical (278 aa).

This sequence belongs to the Ap4A hydrolase family.

The catalysed reaction is P(1),P(4)-bis(5'-adenosyl) tetraphosphate + H2O = 2 ADP + 2 H(+). Functionally, hydrolyzes diadenosine 5',5'''-P1,P4-tetraphosphate to yield ADP. The protein is Bis(5'-nucleosyl)-tetraphosphatase, symmetrical of Nitrosococcus oceani (strain ATCC 19707 / BCRC 17464 / JCM 30415 / NCIMB 11848 / C-107).